The following is a 500-amino-acid chain: Serine carboxypeptidase 3 (500 aa).

Positions 1–21 (MATTPRLASLLLLLALCAAAA) are cleaved as a signal peptide. The propeptide occupies 22 to 73 (GALRLPPDASFPGAQAERLIRALNLLPGRPRRGLGAGAEDVAPGQLLERRVT). Disulfide bonds link C126–C366, C294–C309, and C332–C337. Residue N144 is glycosylated (N-linked (GlcNAc...) asparagine). The active site involves S216. The active site involves D404. C407 contributes to the substrate binding site. H461 is a catalytic residue. A propeptide spanning residues 485–500 (ESVPEEEPATTFYAAI) is cleaved from the precursor.

The protein belongs to the peptidase S10 family. As to quaternary structure, monomer.

The enzyme catalyses Release of a C-terminal amino acid with broad specificity.. This is Serine carboxypeptidase 3 (CBP3) from Triticum aestivum (Wheat).